The sequence spans 405 residues: Palmitoyltransferase PFA5 (405 aa).

Helical transmembrane passes span Tyr12–Ile32, Ile51–Ile71, Leu154–Cys174, Phe191–Ile211, and Phe310–Ile330. Residues Tyr111 to Met161 form the DHHC domain.

This sequence belongs to the DHHC palmitoyltransferase family. PFA5 subfamily. Autopalmitoylated.

It is found in the membrane. The catalysed reaction is L-cysteinyl-[protein] + hexadecanoyl-CoA = S-hexadecanoyl-L-cysteinyl-[protein] + CoA. This Candida albicans (strain SC5314 / ATCC MYA-2876) (Yeast) protein is Palmitoyltransferase PFA5 (PFA5).